Consider the following 260-residue polypeptide: Small ribosomal subunit protein eS1 (260 aa).

The residue at position 30 (Lys-30) is an N6-acetyllysine; alternate. A Glycyl lysine isopeptide (Lys-Gly) (interchain with G-Cter in SUMO2); alternate cross-link involves residue Lys-30. Lys-52 bears the N6-acetyllysine mark. Tyr-151 bears the ADP-ribosyltyrosine mark. Residues 228 to 260 (HGEGSSSGKATGDETGAKVERADGYEPPVQESV) form a disordered region. Phosphoserine is present on residues Ser-232 and Ser-233. Positions 238 to 251 (TGDETGAKVERADG) are enriched in basic and acidic residues. Lys-245 carries the N6-acetyllysine; alternate modification. Lys-245 is covalently cross-linked (Glycyl lysine isopeptide (Lys-Gly) (interchain with G-Cter in SUMO2); alternate). Tyr-252 carries the post-translational modification Phosphotyrosine. Ser-259 is modified (phosphoserine).

The protein belongs to the eukaryotic ribosomal protein eS1 family. As to quaternary structure, component of the small ribosomal subunit. Mature ribosomes consist of a small (40S) and a large (60S) subunit. The 40S subunit contains about 33 different proteins and 1 molecule of RNA (18S). The 60S subunit contains about 49 different proteins and 3 molecules of RNA (28S, 5.8S and 5S). Identified in a IGF2BP1-dependent mRNP granule complex containing untranslated mRNAs. Binds with high affinity to IPO4. Interacts with DDIT3. Part of the small subunit (SSU) processome, composed of more than 70 proteins and the RNA chaperone small nucleolar RNA (snoRNA) U3. ADP-ribosylated at Tyr-151 by PARP1 in presence of HPF1.

Its subcellular location is the cytoplasm. The protein resides in the nucleus. It is found in the nucleolus. Its function is as follows. Component of the small ribosomal subunit. The ribosome is a large ribonucleoprotein complex responsible for the synthesis of proteins in the cell. Part of the small subunit (SSU) processome, first precursor of the small eukaryotic ribosomal subunit. During the assembly of the SSU processome in the nucleolus, many ribosome biogenesis factors, an RNA chaperone and ribosomal proteins associate with the nascent pre-rRNA and work in concert to generate RNA folding, modifications, rearrangements and cleavage as well as targeted degradation of pre-ribosomal RNA by the RNA exosome. May play a role during erythropoiesis through regulation of transcription factor DDIT3. In Felis catus (Cat), this protein is Small ribosomal subunit protein eS1.